The following is a 470-amino-acid chain: Iron-sulfur cluster assembly protein SufB (470 aa).

This sequence belongs to the iron-sulfur cluster assembly SufBD family. In terms of assembly, component of a complex composed of SufB, SufC and SufD in a stoichiometric ratio of 1:2:1. Interacts with SufC. Interacts with SufD.

It participates in cofactor biosynthesis; iron-sulfur cluster biosynthesis. Its function is as follows. Participates in the sulfur mobilization (SUF) pathway for iron-sulfur (Fe-S) cluster biogenesis. As part of a complex consisting of SufB-SufC(2)-SufD, involved in assembly of [4Fe-4S] clusters. Exhibits ATPase activity. The protein is Iron-sulfur cluster assembly protein SufB of Plasmodium falciparum (isolate 3D7).